A 506-amino-acid polypeptide reads, in one-letter code: GTPase Der (506 aa).

EngA-type G domains follow at residues 3 to 166 (PVVA…GEQL) and 218 to 391 (IKIA…ACAT). Residues 9–16 (GRPNVGKS), 56–60 (DTGGI), 118–121 (NKTD), 224–231 (GRPNVGKS), 271–275 (DTAGV), and 336–339 (NKWD) each bind GTP. Positions 392–476 (QKNSTSMLTR…PIRIQFQEGN (85 aa)) constitute a KH-like domain.

It belongs to the TRAFAC class TrmE-Era-EngA-EngB-Septin-like GTPase superfamily. EngA (Der) GTPase family. Associates with the 50S ribosomal subunit.

Its function is as follows. GTPase that plays an essential role in the late steps of ribosome biogenesis. The protein is GTPase Der of Actinobacillus pleuropneumoniae serotype 7 (strain AP76).